Here is a 147-residue protein sequence, read N- to C-terminus: Large ribosomal subunit protein uL13 (147 aa).

It belongs to the universal ribosomal protein uL13 family. As to quaternary structure, part of the 50S ribosomal subunit.

In terms of biological role, this protein is one of the early assembly proteins of the 50S ribosomal subunit, although it is not seen to bind rRNA by itself. It is important during the early stages of 50S assembly. This chain is Large ribosomal subunit protein uL13, found in Rhodococcus erythropolis (strain PR4 / NBRC 100887).